Reading from the N-terminus, the 300-residue chain is uncharacterized protein (300 aa).

This is an uncharacterized protein from Bradyrhizobium diazoefficiens (strain JCM 10833 / BCRC 13528 / IAM 13628 / NBRC 14792 / USDA 110).